The following is a 342-amino-acid chain: N-acetyl-gamma-glutamyl-phosphate reductase (342 aa).

Residue Cys-156 is part of the active site.

This sequence belongs to the NAGSA dehydrogenase family. Type 1 subfamily.

It is found in the cytoplasm. It catalyses the reaction N-acetyl-L-glutamate 5-semialdehyde + phosphate + NADP(+) = N-acetyl-L-glutamyl 5-phosphate + NADPH + H(+). It participates in amino-acid biosynthesis; L-arginine biosynthesis; N(2)-acetyl-L-ornithine from L-glutamate: step 3/4. In terms of biological role, catalyzes the NADPH-dependent reduction of N-acetyl-5-glutamyl phosphate to yield N-acetyl-L-glutamate 5-semialdehyde. The polypeptide is N-acetyl-gamma-glutamyl-phosphate reductase (Pseudoalteromonas atlantica (strain T6c / ATCC BAA-1087)).